Consider the following 488-residue polypeptide: NADH-ubiquinone oxidoreductase chain 2 (488 aa).

The next 14 membrane-spanning stretches (helical) occupy residues 11-31 (MIKYSIYLVPLIIMILLSISI), 38-58 (MMLLFKSLKLTIILILVLLTI), 74-94 (ELITFVEYILLVVSYLIISMF), 106-126 (ITEEALILMYSSLIGMLISME), 129-149 (NLITLFLSLEITSICFYILAL), 162-182 (LKYYIIGGIASTIILLGIVSI), 211-231 (IALIVLGLIIKLGVAPFHGWL), 239-259 (GMLMTFYLTITQKIVTIIVLI), 271-291 (IEVINKGLLVLILVTLIVGTV), 299-319 (VIRFIAYSAIVNSALLILFFV), 331-351 (IYYLINYIIGLAVLINIIIGV), 376-396 (IGISLIIVLIYLAGLPPFTNF), 412-434 (IYITMIIFFLTVGIMIYYMNVVK), and 460-480 (IVGGIIWIIISQIYLDEIISI).

Belongs to the complex I subunit 2 family.

It is found in the mitochondrion inner membrane. The catalysed reaction is a ubiquinone + NADH + 5 H(+)(in) = a ubiquinol + NAD(+) + 4 H(+)(out). Functionally, core subunit of the mitochondrial membrane respiratory chain NADH dehydrogenase (Complex I) that is believed to belong to the minimal assembly required for catalysis. Complex I functions in the transfer of electrons from NADH to the respiratory chain. The immediate electron acceptor for the enzyme is believed to be ubiquinone. The polypeptide is NADH-ubiquinone oxidoreductase chain 2 (nad2) (Dictyostelium discoideum (Social amoeba)).